A 313-amino-acid chain; its full sequence is Ketimine reductase mu-crystallin (313 aa).

Arg47 contacts 3,3',5-triiodo-L-thyronine. NADPH-binding residues include Ser90, His91, Arg118, Ala143, Val145, Gln146, Asn167, Arg168, Thr169, Asn172, Thr204, Met205, and Val225. Glu256 provides a ligand contact to 3,3',5-triiodo-L-thyronine. Residue Ser291 coordinates NADPH.

This sequence belongs to the ornithine cyclodeaminase/mu-crystallin family. In terms of assembly, homodimer. Binds the thyroid hormone triiodothyronine (T3); T3 binding inhibits enzymatic activity.

It localises to the cytoplasm. It carries out the reaction L-pipecolate + NADP(+) = Delta(1)-piperideine-2-carboxylate + NADPH + H(+). The enzyme catalyses L-pipecolate + NAD(+) = Delta(1)-piperideine-2-carboxylate + NADH + H(+). The catalysed reaction is L-proline + NADP(+) = 1-pyrroline-2-carboxylate + NADPH + H(+). It catalyses the reaction L-proline + NAD(+) = 1-pyrroline-2-carboxylate + NADH + H(+). It carries out the reaction (3R)-1,4-thiomorpholine-3-carboxylate + NAD(+) = 3,4-dehydrothiomorpholine-3-carboxylate + NADH + 2 H(+). The enzyme catalyses (3R)-1,4-thiomorpholine-3-carboxylate + NADP(+) = 3,4-dehydrothiomorpholine-3-carboxylate + NADPH + 2 H(+). The catalysed reaction is (S)-cystathionine ketimine + NADH + 2 H(+) = (3R,5S)-2,3,5,6,7-pentahydro-1,4-thiazepine-3,5-dicarboxylate + NAD(+). It catalyses the reaction (S)-cystathionine ketimine + NADPH + 2 H(+) = (3R,5S)-2,3,5,6,7-pentahydro-1,4-thiazepine-3,5-dicarboxylate + NADP(+). It carries out the reaction (R)-lanthionine ketimine + NADPH + 2 H(+) = (3R,5R)-1,4-thiomorpholine-3,5-dicarboxylate + NADP(+). The enzyme catalyses Delta(2)-thiazoline-2-carboxylate + NADPH + 2 H(+) = L-thiazolidine-2-carboxylate + NADP(+). Its function is as follows. Catalyzes the NAD(P)H-dependent reduction of imine double bonds of a number of cyclic ketimine substrates, including sulfur-containing cyclic ketimines. Under physiological conditions, it efficiently catalyzes delta(1)-piperideine-2-carboxylate (P2C) and delta(1)-pyrroline-2-carboxylate (Pyr2C) reduction, suggesting a central role in lysine and glutamate metabolism. Additional substrates are delta(2)-thiazoline-2-carboxylate (T2C), 3,4-dehydrothiomorpholine-3-carboxylate (AECK), and (R)-lanthionine ketimine (LK) that is reduced at very low rate compared to other substrates. Also catalyzes the NAD(P)H-dependent reduction of (S)-cystathionine ketimine (CysK). The protein is Ketimine reductase mu-crystallin of Rattus norvegicus (Rat).